A 324-amino-acid chain; its full sequence is MIEIQKPTIRCEELSQDQKYGRYVIEPLERGYGITIGNALRRTLLSSLPGAAVTAVKIDGVLHEFSTIPGVLEDVPEIILNLKGLAIKMSSPGPKVMYIEAQGECEVKAKDIKADADIEICNPEHHIATLNEDARLFMEITVNQGKGYVPAERNKQSNQPIGVIPVDSIYTPVTKVNYKVENTRVGQVTDYDKLTMEIWTNGTIRPDEALTVAAKILIEHFNLFTDLSNIPTKIETVVKQEPPKRNKLLDMTIEELELSVRSYNCLKRAGINTVEDLVNKTEEEMMKVRNLGKKSLEEVIQKLHSLGLSLKKSDSTPKGEEEEK.

Positions 1–228 (MIEIQKPTIR…EHFNLFTDLS (228 aa)) are alpha N-terminal domain (alpha-NTD). Residues 245–324 (RNKLLDMTIE…STPKGEEEEK (80 aa)) form an alpha C-terminal domain (alpha-CTD) region.

It belongs to the RNA polymerase alpha chain family. Homodimer. The RNAP catalytic core consists of 2 alpha, 1 beta, 1 beta' and 1 omega subunit. When a sigma factor is associated with the core the holoenzyme is formed, which can initiate transcription.

The enzyme catalyses RNA(n) + a ribonucleoside 5'-triphosphate = RNA(n+1) + diphosphate. In terms of biological role, DNA-dependent RNA polymerase catalyzes the transcription of DNA into RNA using the four ribonucleoside triphosphates as substrates. In Caldicellulosiruptor saccharolyticus (strain ATCC 43494 / DSM 8903 / Tp8T 6331), this protein is DNA-directed RNA polymerase subunit alpha.